A 481-amino-acid chain; its full sequence is Xylulose kinase (481 aa).

Residue Q81–H82 participates in substrate binding. The active-site Proton acceptor is D239.

Belongs to the FGGY kinase family.

It catalyses the reaction D-xylulose + ATP = D-xylulose 5-phosphate + ADP + H(+). In terms of biological role, catalyzes the phosphorylation of D-xylulose to D-xylulose 5-phosphate. This is Xylulose kinase from Streptomyces rubiginosus.